Here is a 737-residue protein sequence, read N- to C-terminus: ATP-dependent RNA helicase SUV3, mitochondrial (737 aa).

The transit peptide at 1–25 directs the protein to the mitochondrion; it reads MTLVKYSTIAFPLRSFRLFIFVKKA. The region spanning 226-365 is the Helicase ATP-binding domain; sequence EARKIRRHII…KSVLPLVKSI (140 aa). 239–246 serves as a coordination point for ATP; that stretch reads GPTNSGKT. The Helicase C-terminal domain maps to 390–546; sequence PVKDGIKGLR…YLKTAVTWPT (157 aa).

Belongs to the helicase family.

It is found in the mitochondrion. The enzyme catalyses ATP + H2O = ADP + phosphate + H(+). Functionally, probable ATP-dependent RNA helicase involved in a variety of mitochondrial post-transcriptional processes and in translation. It is a key control element in nuclear-mitochondrial interactions. In Saccharomyces paradoxus (Yeast), this protein is ATP-dependent RNA helicase SUV3, mitochondrial (SUV3).